The sequence spans 186 residues: Peptidyl-tRNA hydrolase (186 aa).

Y16 contacts tRNA. Residue H21 is the Proton acceptor of the active site. TRNA-binding residues include Y66, N68, and N114.

The protein belongs to the PTH family. As to quaternary structure, monomer.

The protein resides in the cytoplasm. The enzyme catalyses an N-acyl-L-alpha-aminoacyl-tRNA + H2O = an N-acyl-L-amino acid + a tRNA + H(+). Its function is as follows. Hydrolyzes ribosome-free peptidyl-tRNAs (with 1 or more amino acids incorporated), which drop off the ribosome during protein synthesis, or as a result of ribosome stalling. In terms of biological role, catalyzes the release of premature peptidyl moieties from peptidyl-tRNA molecules trapped in stalled 50S ribosomal subunits, and thus maintains levels of free tRNAs and 50S ribosomes. In Ureaplasma parvum serovar 3 (strain ATCC 700970), this protein is Peptidyl-tRNA hydrolase.